The chain runs to 769 residues: Calcium up-regulated protein B (769 aa).

The tract at residues 1 to 22 (MINIEDISKSSNQSEEKQLKST) is disordered. Ricin B-type lectin domains are found at residues 25–145 (KPKY…WTTF) and 158–296 (FQSK…WITN).

It belongs to the cup family.

Its subcellular location is the cytoplasm. The protein localises to the membrane. Its function is as follows. May play an important role in stabilizing and/or regulating the cell membrane during Ca(2+) stress or certain stages of development. The protein is Calcium up-regulated protein B (cupB) of Dictyostelium discoideum (Social amoeba).